The sequence spans 329 residues: Sex comb on midleg-like protein 1 (329 aa).

Phosphoserine is present on residues S138 and S238. The segment at 138 to 157 is disordered; sequence SPTLPVSRRENNSPSNLPRP. Positions 258 to 325 constitute an SAM domain; that stretch reads WSVEAVVLFL…YYIDRLKQGK (68 aa).

This sequence belongs to the SCM family.

The protein resides in the nucleus. Putative Polycomb group (PcG) protein. PcG proteins act by forming multiprotein complexes, which are required to maintain the transcriptionally repressive state of homeotic genes throughout development. May be involved in spermatogenesis during sexual maturation. This chain is Sex comb on midleg-like protein 1 (SCML1), found in Pan troglodytes (Chimpanzee).